Here is a 385-residue protein sequence, read N- to C-terminus: Putative cell agglutination protein pfl8 (385 aa).

An N-terminal signal peptide occupies residues 1–20; that stretch reads MNSYISLIFTLLFFTSAARS. Residues 41–90 form a disordered region; that stretch reads SSEFTSTITPETPSSSSSTFVPISTHTSSATNTTSGQLSISSSSSTSSEY. N-linked (GlcNAc...) asparagine glycans are attached at residues Asn-72, Asn-270, and Asn-346. The PA14 domain maps to 196 to 360; it reads EVSTFNKPAY…GPVRTTSYSY (165 aa).

The protein resides in the secreted. The protein localises to the cell surface. In terms of biological role, may be involved in agglutination during conjugation or other aspects of colony formation. Induces flocculation when overexpressed. This Schizosaccharomyces pombe (strain 972 / ATCC 24843) (Fission yeast) protein is Putative cell agglutination protein pfl8.